An 851-amino-acid polypeptide reads, in one-letter code: Internalin J (851 aa).

The signal sequence occupies residues Met-1–Ala-25. LRR repeat units lie at residues Thr-94–Thr-115, Gly-116–Thr-136, Asn-137–Thr-157, Lys-158–Leu-179, Leu-180–Gln-200, Leu-201–Thr-221, Gln-222–Leu-243, Leu-244–Ile-263, Gln-264–Thr-284, Gln-285–Lys-306, Asp-316–Asn-325, Lys-338–Ala-357, Gly-359–Asn-368, and Glu-380–Ile-402. MucBP domains lie at Pro-506 to Val-568, Ile-576 to Val-638, Ala-647 to Val-709, and Ile-717 to Val-779. The segment at Asn-786–Gly-825 is disordered. Low complexity predominate over residues Pro-792 to Thr-811. The LPXTG sorting signal signature appears at Leu-821–Gly-825. Thr-824 carries the post-translational modification Pentaglycyl murein peptidoglycan amidated threonine. A propeptide spans Gly-825 to Lys-851 (removed by sortase A).

Belongs to the internalin family. In terms of assembly, nearly full-length mature protein and an internal LRR-containing fragment interact in vitro with human intestinal mucin-2 (MUC2) but not with mucin-1. LRR fragment binding is slightly better at pH 5.5, (the pH of the intestine) than at pH 7.4.

The protein resides in the secreted. It localises to the cell wall. With respect to regulation, despite being transcribed during bacterial growth in culture the protein is only detected in infected mice. In terms of biological role, involved in several steps of L.monocytogenes infection by both intravenous and oral infection. Probably acts as an adhesion; upon ectopic expression in L.innocula bacteria adhere better to human cell lines. This Listeria monocytogenes serovar 1/2a (strain ATCC BAA-679 / EGD-e) protein is Internalin J (inlJ).